The following is a 463-amino-acid chain: RuvB-like helicase 2 (463 aa).

76-83 (GPPSTGKT) contributes to the ATP binding site.

The protein belongs to the RuvB family. In terms of assembly, may form heterododecamers with RVB1. Component of the SWR1 chromatin remodeling complex, the INO80 chromatin remodeling complex, and of the R2TP complex.

Its subcellular location is the nucleus. It carries out the reaction ATP + H2O = ADP + phosphate + H(+). DNA helicase which participates in several chromatin remodeling complexes, including the SWR1 and the INO80 complexes. The SWR1 complex mediates the ATP-dependent exchange of histone H2A for the H2A variant HZT1 leading to transcriptional regulation of selected genes by chromatin remodeling. The INO80 complex remodels chromatin by shifting nucleosomes and is involved in DNA repair. Also involved in pre-rRNA processing. This Cryptococcus neoformans var. neoformans serotype D (strain JEC21 / ATCC MYA-565) (Filobasidiella neoformans) protein is RuvB-like helicase 2 (RVB2).